Consider the following 655-residue polypeptide: E3 ubiquitin-protein ligase TRIM32 (655 aa).

An RING-type zinc finger spans residues 21–66 (CPICMESFTEEQLRPKLLHCGHTICRQCLEKLLASSINGVRCPFCS). At S56 the chain carries Phosphoserine; by CHEK2. A B box-type; atypical zinc finger spans residues 96-139 (VGLLMCRGCGRRLPRQFCRSCGVVLCEPCREADHQPPGHCTLPV). Zn(2+) contacts are provided by C101, C104, C124, and H129. A coiled-coil region spans residues 139–198 (VKEAAEERRRDFGEKLTRLRELTGELQRRKAALEGVSRDLQARYKAVLQEYGHEERRIQE). The segment at 327–347 (MDMSPEEVAPSPRASPAKQRS) is disordered. Phosphoserine is present on residues S330, S337, and S341. 5 NHL repeats span residues 360–403 (LKKM…FNRK), 417–460 (DSFV…YTMD), 461–501 (GHCV…FTVD), 564–607 (GRQI…FPKG), and 608–648 (GGYS…YSYH).

Belongs to the TRIM/RBCC family. In terms of assembly, it self-associates. Interacts with DTNBP1. Interacts with PIAS4/PIASY upon treatment with UVB and TNF-alpha. Interacts with AMBRA1; promoting activation of ULK1 through unanchored 'Lys-63'-linked polyubiquitin chains. Interacts with TICAM1 and TAX1BP1; these interactions target TICAM1 to TAX1BP1-mediated selective autophagic degradation. Post-translationally, ubiquitinated. In terms of processing, phosphorylation at Ser-56 by CHEK2 under oxidative stress, activates the E3 ligase activity and promotes ATG7 ubiquitination leading to positive regulation of the autophagosme assembly. In terms of tissue distribution, ubiquitous. High expression in brain.

It is found in the cytoplasm. The catalysed reaction is S-ubiquitinyl-[E2 ubiquitin-conjugating enzyme]-L-cysteine + [acceptor protein]-L-lysine = [E2 ubiquitin-conjugating enzyme]-L-cysteine + N(6)-ubiquitinyl-[acceptor protein]-L-lysine.. It functions in the pathway protein modification; protein ubiquitination. E3 ubiquitin ligase that plays a role in various biological processes including neural stem cell differentiation, innate immunity, inflammatory resonse and autophagy. Plays a role in virus-triggered induction of IFN-beta and TNF-alpha by mediating the ubiquitination of STING1. Mechanistically, targets STING1 for 'Lys-63'-linked ubiquitination which promotes the interaction of STING1 with TBK1. Regulates bacterial clearance and promotes autophagy in Mycobacterium tuberculosis-infected macrophages. Negatively regulates TLR3/4-mediated innate immune and inflammatory response by triggering the autophagic degradation of TICAM1 in an E3 activity-independent manner. Plays an essential role in oxidative stress induced cell death by inducing loss of transmembrane potential and enhancing mitochondrial reactive oxygen species (ROS) production during oxidative stress conditions. Ubiquitinates XIAP and targets it for proteasomal degradation. Ubiquitinates DTNBP1 (dysbindin) and promotes its degradation. May ubiquitinate BBS2. Ubiquitinates PIAS4/PIASY and promotes its degradation in keratinocytes treated with UVB and TNF-alpha. Also acts as a regulator of autophagy by mediating formation of unanchored 'Lys-63'-linked polyubiquitin chains that activate ULK1: interaction with AMBRA1 is required for ULK1 activation. Positively regulates dendritic branching by promoting ubiquitination and subsequent degradation of the epigenetic factor CDYL. Under metabolic stress and phosphorylation by CHK2, mediates 'Lys-63'-linked ubiquitination of ATG7 at 'Lys-41' to initiate autophagy. This chain is E3 ubiquitin-protein ligase TRIM32, found in Mus musculus (Mouse).